The sequence spans 340 residues: DNA-directed RNA polymerase subunit alpha (340 aa).

The alpha N-terminal domain (alpha-NTD) stretch occupies residues 1–236 (MLSLSKNWNT…EQLQLFISFE (236 aa)). The alpha C-terminal domain (alpha-CTD) stretch occupies residues 246–340 (TDALPFSPYL…LSNRYEDSYN (95 aa)).

It belongs to the RNA polymerase alpha chain family. Homodimer. The RNAP catalytic core consists of 2 alpha, 1 beta, 1 beta' and 1 omega subunit. When a sigma factor is associated with the core the holoenzyme is formed, which can initiate transcription.

The catalysed reaction is RNA(n) + a ribonucleoside 5'-triphosphate = RNA(n+1) + diphosphate. In terms of biological role, DNA-dependent RNA polymerase catalyzes the transcription of DNA into RNA using the four ribonucleoside triphosphates as substrates. This chain is DNA-directed RNA polymerase subunit alpha, found in Rickettsia felis (strain ATCC VR-1525 / URRWXCal2) (Rickettsia azadi).